The primary structure comprises 339 residues: MRQKLEEIKNSAINELKASLSKDQLEVIRVKYLGKKGELTQILRGMGALSQEERPIVGKVANEVRSYIEETIKEAFSDIKNKEKSIRLENETIDITMPGKKQEVGKRHPLDLTLESMKDIFISMGFTIEEGPEVELDKYNFEALNIPKNHPARGEQDTFYINDNLVLRTQTSPIQIRTMENQKPPIKMIAPGKVYRSDSVDATHSPIFYQMEGLVVDKGITFSDLKGTLELFAKRMFGDKVKTKFRPHHFPFTEPSAEMDATCFVCNGEGCKVCKGSGWIELLGCGMVHPQVLRNCNIDPEVYSGFAFGFGVDRMVMMKYGIDDIRLLYESDMRFLNQF.

Glu254 lines the Mg(2+) pocket.

It belongs to the class-II aminoacyl-tRNA synthetase family. Phe-tRNA synthetase alpha subunit type 1 subfamily. As to quaternary structure, tetramer of two alpha and two beta subunits. It depends on Mg(2+) as a cofactor.

It localises to the cytoplasm. The enzyme catalyses tRNA(Phe) + L-phenylalanine + ATP = L-phenylalanyl-tRNA(Phe) + AMP + diphosphate + H(+). This is Phenylalanine--tRNA ligase alpha subunit from Clostridium botulinum (strain 657 / Type Ba4).